Here is a 327-residue protein sequence, read N- to C-terminus: Protein MRG2 (327 aa).

Residues 1–40 (MGSPNAAAETDLTTDDFIGDTRRDSGSDTETNTDCDGEDL) are disordered. Positions 52 to 101 (FEEGERVLAKHSDCFYEAKVLKVEFKDNEWKYFVHYIGWNKSWDEWIRLD) constitute a Tudor-knot domain. The tract at residues 133–156 (SKMKPRSPNVARGRKRKQDSVDTE) is disordered. An MRG domain is found at 162 to 327 (SDNLLSFNIP…AVEEMEKKEG (166 aa)).

Interacts with HAM1 and HAM2. Interacts (via MRG domain) with CO. Component of the NuA4 histone acetyltransferase complex. Ubiquitous. Mainly expressed in the vasculature of cotyledons and leaves, and in roots and inflorescences.

Its subcellular location is the nucleus. Functionally, chromatin remodeling factor. Acts as a 'reader' protein by binding to H3K4me3 and H3K36me3 to control histone H4 acetylation. Increases the transcriptional levels of the flowering time genes FLC and FT. Binds the chromatin at the FT promoter upon interaction with CO. This Arabidopsis thaliana (Mouse-ear cress) protein is Protein MRG2.